A 397-amino-acid polypeptide reads, in one-letter code: Purine ribonucleoside efflux pump NepI (397 aa).

Residues 1-21 (MNENIAEKFRADGVARPNWSA) are Cytoplasmic-facing. A helical membrane pass occupies residues 22–42 (VFAVAFCVACLITVEFLPVSL). Residues 43 to 54 (LTPMAQDLGISE) are Periplasmic-facing. Residues 55-75 (GVAGQSVTVTAFVAMFSSLFI) traverse the membrane as a helical segment. Residues 76–85 (TQIIQATDRR) lie on the Cytoplasmic side of the membrane. The chain crosses the membrane as a helical span at residues 86 to 106 (YIVILFAVLLTASCLMVSFAN). Serine 107 is a topological domain (periplasmic). A helical membrane pass occupies residues 108–128 (FTLLLLGRACLGLALGGFWAI). Topologically, residues 129 to 147 (SASLTMRLVPARTVPKALS) are cytoplasmic. Residues 148-168 (VIFGAVSIALVIAAPLGSFLG) form a helical membrane-spanning segment. Topologically, residues 169–175 (GIIGWRN) are periplasmic. Residues 176–196 (VFNAAAVMGVLCVIWVVKSLP) form a helical membrane-spanning segment. Topologically, residues 197–215 (SLPGEPSHQKQNMFSLLQR) are cytoplasmic. The helical transmembrane segment at 216–236 (PGVMAGMIAIFMSFAGQFAFF) threads the bilayer. Topologically, residues 237 to 255 (TYIRPVYMNLAGFDVDGLT) are periplasmic. A helical membrane pass occupies residues 256–276 (LVLLSFGIASFVGTSFSSYVL). Over 277–281 (KRSVK) the chain is Cytoplasmic. A helical membrane pass occupies residues 282–302 (LALAGAPLLLALSALTLIVWG). Residues 303–305 (SDK) lie on the Periplasmic side of the membrane. Residues 306–326 (TVAAAIAIIWGLAFALVPVGW) traverse the membrane as a helical segment. Residues 327–343 (STWITRSLADQAEKAGS) are Cytoplasmic-facing. Residues 344-364 (IQVAVIQLANTCGAAVGGYAL) form a helical membrane-spanning segment. The Periplasmic portion of the chain corresponds to 365–366 (DN). The helical transmembrane segment at 367 to 387 (FGLLSPLALSGGLMLLTALVV) threads the bilayer. The Cytoplasmic portion of the chain corresponds to 388–397 (AAKVRITPMS).

It belongs to the major facilitator superfamily. DHA1 family. NepI (TC 2.A.1.2.26) subfamily.

It is found in the cell inner membrane. It catalyses the reaction inosine(in) + H(+)(out) = inosine(out) + H(+)(in). The enzyme catalyses guanosine(in) + H(+)(out) = guanosine(out) + H(+)(in). Functionally, involved in the efflux of purine ribonucleosides, such as inosine and guanosine. The chain is Purine ribonucleoside efflux pump NepI from Salmonella paratyphi A (strain ATCC 9150 / SARB42).